We begin with the raw amino-acid sequence, 344 residues long: Protein RecA (344 aa).

An ATP-binding site is contributed by 65-72; the sequence is GPESSGKT.

The protein belongs to the RecA family.

The protein resides in the cytoplasm. Can catalyze the hydrolysis of ATP in the presence of single-stranded DNA, the ATP-dependent uptake of single-stranded DNA by duplex DNA, and the ATP-dependent hybridization of homologous single-stranded DNAs. It interacts with LexA causing its activation and leading to its autocatalytic cleavage. The protein is Protein RecA of Nitratiruptor sp. (strain SB155-2).